Consider the following 163-residue polypeptide: MPESSFDVVSKADRQEVDNALNQTAKKIAQRFDFKDTGAQIRWSGDLGVEIRANSADRTLAVLDVFKEMLIKRGVSLKFLDVGEPKPSGKEFRLAVTIKQGIPTETARRLITLIKDEGPRGVHAQIQGDQLRVSSKKKDDLQAVIALLKAKDLDIALQFTNYR.

It belongs to the YajQ family.

Functionally, nucleotide-binding protein. The protein is Nucleotide-binding protein Acel_0286 of Acidothermus cellulolyticus (strain ATCC 43068 / DSM 8971 / 11B).